Consider the following 344-residue polypeptide: Polycomb group RING finger protein 2 (344 aa).

An RING-type zinc finger spans residues 18–57 (CALCGGYFIDATTIVECLHSFCKTCIVRYLETNKYCPMCD). Glycyl lysine isopeptide (Lys-Gly) (interchain with G-Cter in SUMO2) cross-links involve residues lysine 51 and lysine 88. A Nuclear localization signal motif is present at residues 81 to 95 (KLVPGLFKDEMKRRR). Polar residues predominate over residues 240 to 253 (TVPTPSEGTNTSGA). The interval 240–344 (TVPTPSEGTN…VNGAPVPPLT (105 aa)) is disordered. Residues 263 to 313 (APSPATLPATSSSLPSPATPSHGSPSSHGPPATHPTSPTPPSTASGATTAA) are compositionally biased toward low complexity. Residues 314–328 (NGGSLNCLQTPSSTS) are compositionally biased toward polar residues. At threonine 344 the chain carries Phosphothreonine.

In terms of assembly, exists as both a monomer and homodimer. Component of a PRC1-like complex. Interacts with CBX8, RING1 and RNF2. Interacts with CBX7. Interacts with PHC2. Phosphorylated. Homodimer formation is regulated by phosphorylation with only unphosphorylated proteins forming homodimers. As to expression, detected in all tissues examined with high expression found in placenta lung and kidney and low expression, in liver, pancreas and skeletal muscle.

It is found in the nucleus. Its function is as follows. Transcriptional repressor. Binds specifically to the DNA sequence 5'-GACTNGACT-3'. Has tumor suppressor activity. May play a role in control of cell proliferation and/or neural cell development. Regulates proliferation of early T progenitor cells by maintaining expression of HES1. Also plays a role in antero-posterior specification of the axial skeleton and negative regulation of the self-renewal activity of hematopoietic stem cells. Component of a Polycomb group (PcG) multiprotein PRC1-like complex, a complex class required to maintain the transcriptionally repressive state of many genes, including Hox genes, throughout development. PcG PRC1 complex acts via chromatin remodeling and modification of histones; it mediates monoubiquitination of histone H2A 'Lys-119', rendering chromatin heritably changed in its expressibility. Within the PRC1-like complex, regulates RNF2 ubiquitin ligase activity. The sequence is that of Polycomb group RING finger protein 2 (PCGF2) from Homo sapiens (Human).